Reading from the N-terminus, the 306-residue chain is Porphobilinogen deaminase (306 aa).

Cys240 carries the S-(dipyrrolylmethanemethyl)cysteine modification.

It belongs to the HMBS family. In terms of assembly, monomer. Dipyrromethane is required as a cofactor.

The catalysed reaction is 4 porphobilinogen + H2O = hydroxymethylbilane + 4 NH4(+). Its pathway is porphyrin-containing compound metabolism; protoporphyrin-IX biosynthesis; coproporphyrinogen-III from 5-aminolevulinate: step 2/4. In terms of biological role, tetrapolymerization of the monopyrrole PBG into the hydroxymethylbilane pre-uroporphyrinogen in several discrete steps. This chain is Porphobilinogen deaminase, found in Syntrophomonas wolfei subsp. wolfei (strain DSM 2245B / Goettingen).